Reading from the N-terminus, the 349-residue chain is Protein-glutamate methylesterase/protein-glutamine glutaminase 1 (349 aa).

Residues 2–119 (RTLIVDDSAF…DVNKAEKELV (118 aa)) enclose the Response regulatory domain. Asp53 carries the 4-aspartylphosphate modification. In terms of domain architecture, CheB-type methylesterase spans 158–345 (ILIGSSTGGP…EEIVKRLEAK (188 aa)). Active-site residues include Ser163, His190, and Asp287.

It belongs to the CheB family. Post-translationally, phosphorylated by CheA. Phosphorylation of the N-terminal regulatory domain activates the methylesterase activity.

The protein localises to the cytoplasm. It catalyses the reaction [protein]-L-glutamate 5-O-methyl ester + H2O = L-glutamyl-[protein] + methanol + H(+). It carries out the reaction L-glutaminyl-[protein] + H2O = L-glutamyl-[protein] + NH4(+). In terms of biological role, involved in chemotaxis. Part of a chemotaxis signal transduction system that modulates chemotaxis in response to various stimuli. Catalyzes the demethylation of specific methylglutamate residues introduced into the chemoreceptors (methyl-accepting chemotaxis proteins or MCP) by CheR. Also mediates the irreversible deamidation of specific glutamine residues to glutamic acid. This chain is Protein-glutamate methylesterase/protein-glutamine glutaminase 1, found in Methanosarcina acetivorans (strain ATCC 35395 / DSM 2834 / JCM 12185 / C2A).